Here is a 692-residue protein sequence, read N- to C-terminus: Polyphosphate kinase (692 aa).

ATP is bound at residue Asn-57. Residues Arg-383 and Arg-413 each coordinate Mg(2+). His-443 functions as the Phosphohistidine intermediate in the catalytic mechanism. Residues Tyr-476, Arg-572, and His-600 each coordinate ATP.

Belongs to the polyphosphate kinase 1 (PPK1) family. Requires Mg(2+) as cofactor. In terms of processing, an intermediate of this reaction is the autophosphorylated ppk in which a phosphate is covalently linked to a histidine residue through a N-P bond.

The catalysed reaction is [phosphate](n) + ATP = [phosphate](n+1) + ADP. Catalyzes the reversible transfer of the terminal phosphate of ATP to form a long-chain polyphosphate (polyP). The polypeptide is Polyphosphate kinase (Acinetobacter baumannii (strain AYE)).